The primary structure comprises 543 residues: uncharacterized protein (543 aa).

The Radical SAM core domain maps to 203-460 (NYPYIIAEIE…FLWFKEKVRE (258 aa)). Residues 470-534 (VVPKGTILRD…RRSITGKVVR (65 aa)) enclose the TRAM domain.

This is an uncharacterized protein from Methanocaldococcus jannaschii (strain ATCC 43067 / DSM 2661 / JAL-1 / JCM 10045 / NBRC 100440) (Methanococcus jannaschii).